The primary structure comprises 428 residues: Kynureninase (428 aa).

Pyridoxal 5'-phosphate contacts are provided by residues Thr104, Thr105, 132–135 (FPSD), Asp213, His216, and Tyr238. Lys239 is subject to N6-(pyridoxal phosphate)lysine. The pyridoxal 5'-phosphate site is built by Trp267 and Thr295.

Belongs to the kynureninase family. As to quaternary structure, homodimer. Requires pyridoxal 5'-phosphate as cofactor.

It carries out the reaction L-kynurenine + H2O = anthranilate + L-alanine + H(+). The catalysed reaction is 3-hydroxy-L-kynurenine + H2O = 3-hydroxyanthranilate + L-alanine + H(+). It functions in the pathway amino-acid degradation; L-kynurenine degradation; L-alanine and anthranilate from L-kynurenine: step 1/1. The protein operates within cofactor biosynthesis; NAD(+) biosynthesis; quinolinate from L-kynurenine: step 2/3. In terms of biological role, catalyzes the cleavage of L-kynurenine (L-Kyn) and L-3-hydroxykynurenine (L-3OHKyn) into anthranilic acid (AA) and 3-hydroxyanthranilic acid (3-OHAA), respectively. This is Kynureninase from Bacillus anthracis.